Here is a 487-residue protein sequence, read N- to C-terminus: Virulence sensor histidine kinase PhoQ (487 aa).

At 1-16 (MNKFARHFLPLSLRVR) the chain is on the cytoplasmic side. Residues 17–37 (FLLATAGVVLVLSLAYGIVAL) traverse the membrane as a helical segment. The Periplasmic portion of the chain corresponds to 38-193 (VGYSVSFDKT…ELKRSYMVWS (156 aa)). Aspartate 151 and aspartate 152 together coordinate a divalent metal cation. A helical transmembrane segment spans residues 194–214 (WFVYVLAANLLLVIPLLWIAA). One can recognise an HAMP domain in the interval 215-266 (WWSLRPIEALAREVRELEDHHREMLNPETTRELTSLVRNLNQLLKSERERYN). Topologically, residues 215–487 (WWSLRPIEAL…GRQHPTQKEE (273 aa)) are cytoplasmic. A Histidine kinase domain is found at 274-481 (DLTHSLKTPL…RMEVVFGRQH (208 aa)). Histidine 277 bears the Phosphohistidine; by autocatalysis mark. Asparagine 386 contributes to the Mg(2+) binding site. ATP is bound by residues 386 to 394 (NVLDNACKY), 416 to 421 (DDGPGI), and 435 to 447 (RADT…GVGL). Glutamine 443 lines the Mg(2+) pocket.

Homodimer.

Its subcellular location is the cell inner membrane. The catalysed reaction is ATP + protein L-histidine = ADP + protein N-phospho-L-histidine.. Its function is as follows. Member of the two-component regulatory system PhoP/PhoQ which regulates the expression of genes involved in virulence and resistance to host defense antimicrobial peptides. In low periplasmic Mg(2+), PhoQ functions as a membrane-associated protein kinase that undergoes autophosphorylation and subsequently transfers the phosphate to PhoP, which results in the expression of PhoP-activated genes (PAG) and repression of PhoP-repressed genes (PRG). In high periplasmic Mg(2+), acts as a protein phosphatase that dephosphorylates phospho-PhoP, which results in the repression of PAG and may lead to expression of some PRG. Promotes intramacrophage survival of S.typhi. Is required to enhance bacterial resistance to bile in the human intestinal cells. The sequence is that of Virulence sensor histidine kinase PhoQ (phoQ) from Salmonella typhi.